Reading from the N-terminus, the 129-residue chain is Virion-associated protein (129 aa).

Coiled-coil stretches lie at residues 1-31 (MANLNQIQKEVSEILSDQKSMKADIKAILEL) and 38-59 (IKESLETVAAKIVNDLTKLIND). The interval 122–129 (PAGWPNQF) is capsid binding.

It belongs to the caulimovirus ORF III family. In terms of assembly, homotetramer, through coiled-coil domain. Homotrimer when bound on icosehadral capsid. Interacts with capsid protein, and with movement protein.

The protein localises to the virion. It is found in the host cell junction. The protein resides in the host plasmodesma. In terms of biological role, plays a role in virus cell-to-cell and plant-to-plant transmission. Interacts with virion icosahedral capsid and movement protein, thereby facilitating virion cell-to-cell transmission through plasmodesmata opened by viral movement protein. Also interacts with aphid transmission factor, attaching the virion to aphid stylet when the animal feeds on an virus infected plant. Aphid saliva may later detach the virion, inducing release of infectious particles when the animal feeds on a new plant. In Cauliflower mosaic virus (strain Strasbourg) (CaMV), this protein is Virion-associated protein.